Here is a 127-residue protein sequence, read N- to C-terminus: Glycine cleavage system H protein (127 aa).

In terms of domain architecture, Lipoyl-binding spans 24–106; the sequence is TATLGISAFA…YGEGWLVKVQ (83 aa). K65 is modified (N6-lipoyllysine).

Belongs to the GcvH family. The glycine cleavage system is composed of four proteins: P, T, L and H. The cofactor is (R)-lipoate.

Functionally, the glycine cleavage system catalyzes the degradation of glycine. The H protein shuttles the methylamine group of glycine from the P protein to the T protein. The protein is Glycine cleavage system H protein of Thermosynechococcus vestitus (strain NIES-2133 / IAM M-273 / BP-1).